The primary structure comprises 258 residues: Clathrin light chain 3 (258 aa).

Polar residues predominate over residues 1–18; sequence MSSTLSNEESGLGDSNRS. The interval 1–96 is disordered; that stretch reads MSSTLSNEES…PPPSAMEKEE (96 aa). N-acetylserine is present on Ser-2. The span at 34-50 shows a compositional bias: low complexity; it reads SRFQSQRFDSSFSNFDS. Residues 66–79 show a composition bias toward polar residues; it reads RPETQSPPSINSFD. An involved in binding clathrin heavy chain region spans residues 90–152; sequence SAMEKEEGFA…TIENNKKLNR (63 aa). Residues 105–164 are a coiled coil; it reads RLNALRLEEKEKEEKEMVQQILEAAEQYKAEFYSKRNVTIENNKKLNREKEKFFLENQEK. The segment covering 224–234 has biased composition (basic residues); it reads LKHNPPTHMKP. Positions 224–258 are disordered; sequence LKHNPPTHMKPKLPSPSGADPNVSVSEQVTVTEKL. Over residues 246 to 258 the composition is skewed to polar residues; it reads VSVSEQVTVTEKL.

This sequence belongs to the clathrin light chain family. In terms of assembly, clathrin coats are formed from molecules containing 3 heavy chains and 3 light chains.

It is found in the cytoplasmic vesicle membrane. The protein resides in the membrane. It localises to the coated pit. In terms of biological role, clathrin is the major protein of the polyhedral coat of coated pits and vesicles. The polypeptide is Clathrin light chain 3 (Arabidopsis thaliana (Mouse-ear cress)).